A 1715-amino-acid polypeptide reads, in one-letter code: Ubiquitin carboxyl-terminal hydrolase 32 (1715 aa).

EF-hand domains lie at 161–196 (IPKN…ACRG) and 197–232 (PGVE…LLLV). 9 residues coordinate Ca(2+): Asp174, Asn176, Asp178, His180, Glu185, Asp210, Asp212, Asp214, and Glu221. Residues 314–492 (QCKHMENDIV…DNLPLPRQVI (179 aa)) enclose the DUSP domain. The disordered stretch occupies residues 393–429 (QHDSYSLGSGTGSASGSGSASSGISAGRHCGPVRPGP). Residues 408–419 (GSGSASSGISAG) are compositionally biased toward low complexity. The USP domain maps to 677–1675 (TGLHNLGNTC…AAYLLFYERK (999 aa)). The active-site Nucleophile is the Cys686. 2 stretches are compositionally biased toward polar residues: residues 1103–1126 (TESN…SSLT) and 1150–1164 (YRTS…STGH). Disordered stretches follow at residues 1103–1213 (TESN…PHKA) and 1536–1569 (DEID…GNIL). A compositionally biased stretch (acidic residues) spans 1171–1180 (DVDEQAEEGN). The span at 1188–1209 (DQITTSQPETSSGVYSRRSSQP) shows a compositional bias: polar residues. Basic and acidic residues predominate over residues 1540–1549 (APSKEVKEEL). A compositionally biased stretch (polar residues) spans 1550–1559 (PNQTGSTKAT). His1633 functions as the Proton acceptor in the catalytic mechanism.

This sequence belongs to the peptidase C19 family. USP20/USP33 subfamily.

The catalysed reaction is Thiol-dependent hydrolysis of ester, thioester, amide, peptide and isopeptide bonds formed by the C-terminal Gly of ubiquitin (a 76-residue protein attached to proteins as an intracellular targeting signal).. Functionally, deubiquitinating enzyme that acts as an inhibitor of mitophagy probably by counteracting the action of park. Possibly functions by hydrolyzing ubiquitin attached by park on target proteins, thereby reducing park's ability to drive mitophagy. The polypeptide is Ubiquitin carboxyl-terminal hydrolase 32 (Drosophila melanogaster (Fruit fly)).